Reading from the N-terminus, the 264-residue chain is Small ribosomal subunit protein uS2 (264 aa).

It belongs to the universal ribosomal protein uS2 family.

In Synechococcus sp. (strain JA-2-3B'a(2-13)) (Cyanobacteria bacterium Yellowstone B-Prime), this protein is Small ribosomal subunit protein uS2.